The chain runs to 205 residues: Potassium-transporting ATPase KdpC subunit (205 aa).

Residues Pro7–Met27 traverse the membrane as a helical segment.

It belongs to the KdpC family. As to quaternary structure, the system is composed of three essential subunits: KdpA, KdpB and KdpC.

The protein localises to the cell inner membrane. Part of the high-affinity ATP-driven potassium transport (or Kdp) system, which catalyzes the hydrolysis of ATP coupled with the electrogenic transport of potassium into the cytoplasm. This subunit acts as a catalytic chaperone that increases the ATP-binding affinity of the ATP-hydrolyzing subunit KdpB by the formation of a transient KdpB/KdpC/ATP ternary complex. This is Potassium-transporting ATPase KdpC subunit from Nitrobacter hamburgensis (strain DSM 10229 / NCIMB 13809 / X14).